The primary structure comprises 308 residues: uncharacterized protein (308 aa).

Helical transmembrane passes span Ile10 to Ile30, Leu91 to Leu111, Leu115 to Ile135, Val178 to Met198, Ile219 to Leu239, Leu251 to Ile271, and Ile288 to Phe308.

It to M.jannaschii MJ0871, MJ1556 and MJ1589.

It localises to the cell membrane. This is an uncharacterized protein from Methanocaldococcus jannaschii (strain ATCC 43067 / DSM 2661 / JAL-1 / JCM 10045 / NBRC 100440) (Methanococcus jannaschii).